Consider the following 473-residue polypeptide: Homeobox protein ATH1 (473 aa).

Residues 205–221 (SKYLHSVQEILSHFAAY) form an SR/KY domain region. The segment at 266-336 (QRRALEAKKT…NLRERICKKI (71 aa)) is BELL domain. The homeobox DNA-binding region spans 372–434 (IWRPQRGLPE…NARVRLWKPM (63 aa)). A disordered region spans residues 448 to 473 (NNSHIQPNGPTLRMPKSVMMSQAMHK).

This sequence belongs to the TALE/BELL homeobox family. As to quaternary structure, may form heterodimeric complex with the TALE/KNOX protein STM. Most abundant in flowers.

It localises to the nucleus. Transcription factor which may be involved in the signal transduction pathway downstream of the COP1 gene. Controls floral competency as a specific activator of FLC expression. Is responsive of the nuclear import of SHOOT MERISTEMLESS (STM). The chain is Homeobox protein ATH1 (ATH1) from Arabidopsis thaliana (Mouse-ear cress).